The primary structure comprises 28 residues: Morintide mO6 (28 aa).

One can recognise a Chitin-binding type-1 domain in the interval 1–28; it reads NGLCCSQYGFCGTTSAYCSRANGCQSNC. Intrachain disulfides connect C4–C18 and C24–C28.

Seeds (at protein level).

In terms of biological role, chitin-binding protein which functions in defense against chitin-containing fungal pathogens. In Moringa oleifera (Horseradish tree), this protein is Morintide mO6.